A 404-amino-acid chain; its full sequence is Zinc metalloprotease Rip1 (404 aa).

A helical membrane pass occupies residues methionine 1 to histidine 21. Histidine 21 lines the Zn(2+) pocket. The active site involves glutamate 22. Histidine 25 provides a ligand contact to Zn(2+). A helical membrane pass occupies residues proline 104–leucine 124. One can recognise a PDZ domain in the interval valine 121–glycine 203. Aspartate 202 is a binding site for Zn(2+). 2 helical membrane passes run leucine 313 to leucine 333 and leucine 373 to threonine 393.

The protein belongs to the peptidase M50B family. It depends on Zn(2+) as a cofactor.

The protein localises to the cell membrane. Functionally, a probable intramembrane site-2 protease (S2P) that cleaves type-2 transmembrane proteins within their membrane-spanning domains. Cleaves PbpB (PBP3, FtsI); cleavage is inhibited by Wag31-PbpB interaction. Probably also cleaves anti-sigma factors RskA, RslA and RsmA. In terms of biological role, regulated intramembrane proteolysis (RIP) occurs when an extracytoplasmic signal (possibly oxidative stress) triggers a concerted proteolytic cascade to transmit information and elicit cellular responses. The membrane-spanning regulatory substrate protein (includes anti-sigma factors RskA, RslA, RsmA, and PbpB in M.tuberculosis) is first cut extracytoplasmically (site-1 protease, S1P), then within the membrane itself (site-2 protease, S2P, this entry), while cytoplasmic proteases finish degrading the regulatory protein, liberating the effector protein (ECF sigma factors SigK, SigL and SigM). This Mycobacterium bovis (strain BCG / Pasteur 1173P2) protein is Zinc metalloprotease Rip1 (rip1).